Consider the following 835-residue polypeptide: Translation initiation factor IF-2 (835 aa).

A disordered region spans residues 1 to 243 (MSDTDGKKTL…RARQKAMGGA (243 aa)). The span at 43–67 (VPKPGAGKPSAGGSSPAGDPSRRPA) shows a compositional bias: low complexity. 3 stretches are compositionally biased toward basic and acidic residues: residues 85 to 147 (KARE…EAKR), 157 to 166 (EAPKAERSAE), and 175 to 205 (EGGDNARRTTDRDREREQRQTRGKGRQDGRR). The tr-type G domain occupies 332 to 500 (PRPPVITIMG…AIALQAEILE (169 aa)). The tract at residues 341-348 (GHVDHGKT) is G1. 341-348 (GHVDHGKT) contributes to the GTP binding site. The segment at 366-370 (GITQH) is G2. Residues 388-391 (DTPG) are G3. GTP-binding positions include 388–392 (DTPGH) and 442–445 (NKID). Positions 442-445 (NKID) are G4. The tract at residues 478–480 (SAK) is G5.

Belongs to the TRAFAC class translation factor GTPase superfamily. Classic translation factor GTPase family. IF-2 subfamily.

The protein localises to the cytoplasm. Functionally, one of the essential components for the initiation of protein synthesis. Protects formylmethionyl-tRNA from spontaneous hydrolysis and promotes its binding to the 30S ribosomal subunits. Also involved in the hydrolysis of GTP during the formation of the 70S ribosomal complex. The chain is Translation initiation factor IF-2 from Ruegeria pomeroyi (strain ATCC 700808 / DSM 15171 / DSS-3) (Silicibacter pomeroyi).